Reading from the N-terminus, the 462-residue chain is Cysteine--tRNA ligase (462 aa).

A Zn(2+)-binding site is contributed by Cys-28. The short motif at 30–40 (VTIYDLCHIGH) is the 'HIGH' region element. The Zn(2+) site is built by Cys-211, His-236, and Glu-240. Positions 268 to 272 (KMSKS) match the 'KMSKS' region motif. Lys-271 serves as a coordination point for ATP.

The protein belongs to the class-I aminoacyl-tRNA synthetase family. In terms of assembly, monomer. The cofactor is Zn(2+).

Its subcellular location is the cytoplasm. The enzyme catalyses tRNA(Cys) + L-cysteine + ATP = L-cysteinyl-tRNA(Cys) + AMP + diphosphate. This is Cysteine--tRNA ligase from Aliivibrio salmonicida (strain LFI1238) (Vibrio salmonicida (strain LFI1238)).